The primary structure comprises 163 residues: Probable chemoreceptor glutamine deamidase CheD (163 aa).

Belongs to the CheD family.

The catalysed reaction is L-glutaminyl-[protein] + H2O = L-glutamyl-[protein] + NH4(+). Its function is as follows. Probably deamidates glutamine residues to glutamate on methyl-accepting chemotaxis receptors (MCPs), playing an important role in chemotaxis. In Borreliella afzelii (strain PKo) (Borrelia afzelii), this protein is Probable chemoreceptor glutamine deamidase CheD.